The sequence spans 326 residues: MGRSPCCDKLGLKKGPWTPEEDQKLLAYIEEHGHGSWRSLPEKAGLHRCGKSCRLRWTNYLRPDIKRGKFNLQEEQTIIQLHALLGNRWSAIATHLPKRTDNEIKNYWNTHLKKRLVKMGIDPVTHKPKNETPLSSLGLSKNAAILSHTAQWESARLEAEARLARESKLLHLQHYQTKTSSQPHHHHGFTHKSLLPNWTTKPHEDQQQLESPTSTVSFSEMKESIPAKIEFVGSSTGVTLMKEPEHDWINSTMHEFETTQMGEGIEEGFTGLLLGGDSIDRSFSGDKNETAGESSGGDCNYYEDNKNYLDSIFNFVDPSPSDSPMF.

2 consecutive HTH myb-type domains span residues 9 to 61 (KLGL…TNYL) and 62 to 116 (RPDI…KKRL). DNA-binding regions (H-T-H motif) lie at residues 37–61 (WRSLPEKAGLHRCGKSCRLRWTNYL) and 89–112 (WSAIATHLPKRTDNEIKNYWNTHL). Disordered stretches follow at residues 197–217 (NWTTKPHEDQQQLESPTSTVS) and 280–299 (DRSFSGDKNETAGESSGGDC). Over residues 208–217 (QLESPTSTVS) the composition is skewed to polar residues. The segment covering 280–290 (DRSFSGDKNET) has biased composition (basic and acidic residues).

As to expression, expressed in trichomes, epidermis and mesophyll cells of young leaves, stems, petals, sepals, carpels and stamens.

Its subcellular location is the nucleus. In terms of biological role, involved in the control of epidermal cell morphogenesis in petals. Promotes unidirectional cell expansion once outgrowth has been initiated. Coordinately with WIN1/SHN1, participates in the regulation of cuticle biosynthesis and wax accumulation in reproductive organs and trichomes. Functions in cuticle nanoridge formation in petals and stamens, and in morphogenesis of petal conical cells and trichomes. Functions as a major regulator of cuticle formation in vegetative organs by regulating the cuticle biosynthesis genes CYP86A8/LCR and CER1. This Arabidopsis thaliana (Mouse-ear cress) protein is Transcription factor MYB16.